The following is a 184-amino-acid chain: ATP synthase subunit b, chloroplastic (184 aa).

The chain crosses the membrane as a helical span at residues 27–49 (LATNLINLSVVLGVLIFFGKGVL).

Belongs to the ATPase B chain family. F-type ATPases have 2 components, F(1) - the catalytic core - and F(0) - the membrane proton channel. F(1) has five subunits: alpha(3), beta(3), gamma(1), delta(1), epsilon(1). F(0) has four main subunits: a(1), b(1), b'(1) and c(10-14). The alpha and beta chains form an alternating ring which encloses part of the gamma chain. F(1) is attached to F(0) by a central stalk formed by the gamma and epsilon chains, while a peripheral stalk is formed by the delta, b and b' chains.

The protein resides in the plastid. Its subcellular location is the chloroplast thylakoid membrane. Its function is as follows. F(1)F(0) ATP synthase produces ATP from ADP in the presence of a proton or sodium gradient. F-type ATPases consist of two structural domains, F(1) containing the extramembraneous catalytic core and F(0) containing the membrane proton channel, linked together by a central stalk and a peripheral stalk. During catalysis, ATP synthesis in the catalytic domain of F(1) is coupled via a rotary mechanism of the central stalk subunits to proton translocation. In terms of biological role, component of the F(0) channel, it forms part of the peripheral stalk, linking F(1) to F(0). This is ATP synthase subunit b, chloroplastic from Nymphaea alba (White water-lily).